Here is a 512-residue protein sequence, read N- to C-terminus: MLFEGLELVSALATLAACLVSVTLLLAVSQQLWQLRWAATRDKSCKLPIPKGSMGFPLIGETGHWLLQGSGFQSSRREKYGNVFKTHLLGRPLIRVTGAENVRKILLGEHQLVSTEWPRSARVLLGPNTVANSIGDIHRNKRKVFSKIFSHEALESYLPKIQLVIQDTLRAWSSQPEAINVYQEAQRLTFRMAVRVLLGFSIPEEDLGNLFEVYQQFVENVFSLPVDLPFSGYRRGIQARQILQKGLEKAIREKLQCTQGKDYSDALDILIESSKEHGKEMTMQELKDGTLELIFAAYATTASASTSLIMQLLKHPAVLEKLREELRAQGLLHGGGCPCEGTLRLDMLSGLRYLDCVIKEVMRLFTPVSGGYRTVLQTFELDGFQIPKGWSVMYSIRDTHDTAPVFKDVNVFDPDRFSQARSEDKDGRFHYLPFGGGVRTCLGKHLAKLFLKVLAVELASTSRFELATRTFPRITLVPVLHPVDGLSVKFFGLDSNQNEILPETEAMLSATV.

Residue C441 coordinates heme.

This sequence belongs to the cytochrome P450 family. The cofactor is heme.

The protein resides in the endoplasmic reticulum membrane. The protein localises to the microsome membrane. The enzyme catalyses all-trans-retinoate + reduced [NADPH--hemoprotein reductase] + O2 = all-trans-4-hydroxyretinoate + oxidized [NADPH--hemoprotein reductase] + H2O + H(+). It carries out the reaction all-trans-retinoate + reduced [NADPH--hemoprotein reductase] + O2 = all-trans-18-hydroxyretinoate + oxidized [NADPH--hemoprotein reductase] + H2O + H(+). In terms of biological role, a cytochrome P450 monooxygenase involved in the metabolism of retinoates (RAs), the active metabolites of vitamin A, and critical signaling molecules in animals. RAs exist as at least four different isomers: all-trans-RA (atRA), 9-cis-RA, 13-cis-RA, and 9,13-dicis-RA, where atRA is considered to be the biologically active isomer, although 9-cis-RA and 13-cis-RA also have activity. Catalyzes the hydroxylation of atRA primarily at C-4 and C-18, thereby contributing to the regulation of atRA homeostasis and signaling. Hydroxylation of atRA limits its biological activity and initiates a degradative process leading to its eventual elimination. Involved in the convertion of atRA to all-trans-4-oxo-RA. Can oxidize all-trans-13,14-dihydroretinoate (DRA) to metabolites which could include all-trans-4-oxo-DRA, all-trans-4-hydroxy-DRA, all-trans-5,8-epoxy-DRA, and all-trans-18-hydroxy-DRA. Shows preference for the following substrates: atRA &gt; 9-cis-RA &gt; 13-cis-RA. Plays a central role in germ cell development: acts by degrading RAs in the developing testis, preventing STRA8 expression, thereby leading to delay of meiosis. Required for the maintenance of the undifferentiated state of male germ cells during embryonic development in Sertoli cells, inducing arrest in G0 phase of the cell cycle and preventing meiotic entry. Plays a role in skeletal development, both at the level of patterning and in the ossification of bone and the establishment of some synovial joints. Essential for postnatal survival. Functionally, also has a significant activity in oxidation of tazarotenic acid and may therefore metabolize that xenobiotic in vivo. This chain is Cytochrome P450 26B1 (Cyp26b1), found in Rattus norvegicus (Rat).